The sequence spans 61 residues: Probable tautomerase LL0574 (61 aa).

Residue Pro2 is the Proton acceptor; via imino nitrogen of the active site.

This sequence belongs to the 4-oxalocrotonate tautomerase family.

The polypeptide is Probable tautomerase LL0574 (Lactococcus lactis subsp. lactis (strain IL1403) (Streptococcus lactis)).